A 232-amino-acid polypeptide reads, in one-letter code: Thrombin-like enzyme BjussuSP-1 (232 aa).

Residues 1-223 (VLGGDECDIN…YTDWIQRNIA (223 aa)) enclose the Peptidase S1 domain. 6 disulfide bridges follow: Cys7/Cys138, Cys25/Cys41, Cys73/Cys230, Cys117/Cys184, Cys149/Cys163, and Cys174/Cys199. His40 serves as the catalytic Charge relay system. A glycan (N-linked (GlcNAc...) asparagine) is linked at Asn77. The active-site Charge relay system is the Asp85. N-linked (GlcNAc...) asparagine glycosylation is present at Asn129. Ser178 acts as the Charge relay system in catalysis.

This sequence belongs to the peptidase S1 family. Snake venom subfamily. As to quaternary structure, monomer. In terms of processing, N-glycosylated. Contains sialic acid residues. Deglycosylation reduces in 50% the formation of fibrin clot. As to expression, expressed by the venom gland.

It localises to the secreted. Its activity is regulated as follows. Inhibited by leupeptin, heparin, and 1.10-phenantroline. Its function is as follows. Thrombin-like enzyme that shows clotting activity upon human plasma. Shows specific fibrinogenolytic activity for Aalpha chain (FGA). Hydrolyzes fibrin, BAPNA and TAME, as well as chromogenic artificial substrates of the blood coagulation cascasde: S-27654 for factor X (F10), S-2302 for kallikrein (KLK), factor XIa (F11), and XIIa (F12), and S-2266 for kallikrein and factor XIa (F11). Subcutaneous injection into mice induces a mild edema. Intravenous and intramuscular injection reduce plasma fibrinogen concentration and increase the levels of fibrin(ogen) degradation products. Intramuscular injection also promotes an increase in the expression of proMMP-9, but is unable to activate it. In Bothrops jararacussu (Jararacussu), this protein is Thrombin-like enzyme BjussuSP-1.